A 1275-amino-acid polypeptide reads, in one-letter code: Serine/threonine-protein kinase ULK4 (1275 aa).

The Protein kinase domain maps to 4–280 (FILYEEIGRG…WTRLLQHSFW (277 aa)). Disordered regions lie at residues 299–350 (SRNT…KSTL) and 364–392 (RPTP…TSPL). A compositionally biased stretch (basic and acidic residues) spans 336 to 348 (FRLENPTEFRPKS). Residues 364–373 (RPTPRTSTAV) are compositionally biased toward polar residues. HEAT repeat units lie at residues 842–880 (LKLC…ILSH), 926–964 (STVV…LLVN), 1025–1063 (LVEE…NLVA), 1151–1189 (NRPL…LYGG), and 1213–1253 (PKEQ…LAPG).

This sequence belongs to the protein kinase superfamily. Ser/Thr protein kinase family. APG1/unc-51/ULK1 subfamily. In terms of tissue distribution, expressed in the brain, mainly in postmitotic neurons, including GABAergic neurons, but not in astrocytes (at protein level).

It catalyses the reaction L-seryl-[protein] + ATP = O-phospho-L-seryl-[protein] + ADP + H(+). It carries out the reaction L-threonyl-[protein] + ATP = O-phospho-L-threonyl-[protein] + ADP + H(+). Its function is as follows. May be involved in the remodeling of cytoskeletal components, such as alpha-tubulin, and in this way regulates neurite branching and elongation, as well as cell motility. The polypeptide is Serine/threonine-protein kinase ULK4 (ULK4) (Homo sapiens (Human)).